Reading from the N-terminus, the 539-residue chain is O-phosphoserine--tRNA(Cys) ligase (539 aa).

Substrate-binding positions include 188–190 (HMT), 233–235 (SAS), 275–276 (YY), and Asn-327.

This sequence belongs to the class-II aminoacyl-tRNA synthetase family. O-phosphoseryl-tRNA(Cys) synthetase subfamily. As to quaternary structure, homotetramer. Interacts with SepCysS.

The catalysed reaction is tRNA(Cys) + O-phospho-L-serine + ATP = O-phospho-L-seryl-tRNA(Cys) + AMP + diphosphate. Its function is as follows. Catalyzes the attachment of O-phosphoserine (Sep) to tRNA(Cys). In Methanosarcina acetivorans (strain ATCC 35395 / DSM 2834 / JCM 12185 / C2A), this protein is O-phosphoserine--tRNA(Cys) ligase.